Reading from the N-terminus, the 294-residue chain is Pyridoxal 5'-phosphate synthase subunit PdxS (294 aa).

Aspartate 24 provides a ligand contact to D-ribose 5-phosphate. The active-site Schiff-base intermediate with D-ribose 5-phosphate is the lysine 81. Glycine 153 serves as a coordination point for D-ribose 5-phosphate. Arginine 165 is a D-glyceraldehyde 3-phosphate binding site. D-ribose 5-phosphate-binding positions include glycine 214 and 235-236 (GS).

The protein belongs to the PdxS/SNZ family. Homohexamer and homododecamer. In the presence of PdxT, forms a dodecamer of heterodimers.

The enzyme catalyses aldehydo-D-ribose 5-phosphate + D-glyceraldehyde 3-phosphate + L-glutamine = pyridoxal 5'-phosphate + L-glutamate + phosphate + 3 H2O + H(+). It participates in cofactor biosynthesis; pyridoxal 5'-phosphate biosynthesis. Catalyzes the formation of pyridoxal 5'-phosphate from ribose 5-phosphate (RBP), glyceraldehyde 3-phosphate (G3P) and ammonia. The ammonia is provided by the PdxT subunit. Can also use ribulose 5-phosphate and dihydroxyacetone phosphate as substrates, resulting from enzyme-catalyzed isomerization of RBP and G3P, respectively. The polypeptide is Pyridoxal 5'-phosphate synthase subunit PdxS (Geobacillus kaustophilus (strain HTA426)).